The chain runs to 256 residues: MKIITCYKCVPDEQDIAINNADGTLDFSKADSKISQYDLNAIEAACQLKQQLGDAQVVAMSVGGKALTNAKGRKDVLSRGPDELIVVIDDQFEQALPQHTATALAAAAQKSGFDLLICGDGSSDLYAQQVGLLVGEALNIPAINGVSKILSLTDSTLTVERELEDEVETLSIPLPAVIAVSTDINTPQIPSMKAILGAAKKPVQVWSPADIGLNSVPAYSTQQVAAPKQRERQRVVIEGDGEEQIAAFVENLRKII.

Belongs to the ETF beta-subunit/FixA family. As to quaternary structure, heterodimer of FixA and FixB.

The protein operates within amine and polyamine metabolism; carnitine metabolism. Required for anaerobic carnitine reduction. May bring reductant to CaiA. This Salmonella paratyphi A (strain ATCC 9150 / SARB42) protein is Protein FixA.